Consider the following 376-residue polypeptide: PqqA peptide cyclase (376 aa).

The 216-residue stretch at 4–219 (VPPPLSVLLE…VETARRSLGD (216 aa)) folds into the Radical SAM core domain. [4Fe-4S] cluster is bound by residues cysteine 18, cysteine 22, and cysteine 25.

This sequence belongs to the radical SAM superfamily. PqqE family. As to quaternary structure, interacts with PqqD. The interaction is necessary for activity of PqqE. Requires [4Fe-4S] cluster as cofactor.

The catalysed reaction is [PQQ precursor protein] + S-adenosyl-L-methionine = E-Y cross-linked-[PQQ precursor protein] + 5'-deoxyadenosine + L-methionine + H(+). The protein operates within cofactor biosynthesis; pyrroloquinoline quinone biosynthesis. Catalyzes the cross-linking of a glutamate residue and a tyrosine residue in the PqqA protein as part of the biosynthesis of pyrroloquinoline quinone (PQQ). This Xanthomonas campestris pv. campestris (strain B100) protein is PqqA peptide cyclase.